The following is a 453-amino-acid chain: uncharacterized protein (453 aa).

2 disordered regions span residues 140-161 and 311-332; these read YGESKRKRSKRSSKPLPGTRPQ and TTTRQPNFDKTKTPATMPSASS.

This is an uncharacterized protein from Caenorhabditis elegans.